A 338-amino-acid chain; its full sequence is Tetraacyldisaccharide 4'-kinase (338 aa).

An ATP-binding site is contributed by 51-58 (HLGGAGKT).

It belongs to the LpxK family.

It catalyses the reaction a lipid A disaccharide + ATP = a lipid IVA + ADP + H(+). It participates in glycolipid biosynthesis; lipid IV(A) biosynthesis; lipid IV(A) from (3R)-3-hydroxytetradecanoyl-[acyl-carrier-protein] and UDP-N-acetyl-alpha-D-glucosamine: step 6/6. Its function is as follows. Transfers the gamma-phosphate of ATP to the 4'-position of a tetraacyldisaccharide 1-phosphate intermediate (termed DS-1-P) to form tetraacyldisaccharide 1,4'-bis-phosphate (lipid IVA). This Rhodopseudomonas palustris (strain BisB5) protein is Tetraacyldisaccharide 4'-kinase.